Consider the following 485-residue polypeptide: Probable protein phosphatase 2C 3 (485 aa).

Positions 1 to 11 (MSSPSPSSEAA) are enriched in low complexity. Disordered regions lie at residues 1–29 (MSSP…AAGG) and 43–72 (ARAE…AEGG). Over residues 13–23 (AHHHHHQRRQH) the composition is skewed to basic residues. The PPM-type phosphatase domain maps to 107-353 (SSSSSSSLAS…DDTTCIVVDM (247 aa)). Mn(2+) contacts are provided by aspartate 129, glycine 130, aspartate 305, and aspartate 344.

Belongs to the PP2C family. Requires Mg(2+) as cofactor. Mn(2+) is required as a cofactor.

The catalysed reaction is O-phospho-L-seryl-[protein] + H2O = L-seryl-[protein] + phosphate. It carries out the reaction O-phospho-L-threonyl-[protein] + H2O = L-threonyl-[protein] + phosphate. The polypeptide is Probable protein phosphatase 2C 3 (Oryza sativa subsp. japonica (Rice)).